Reading from the N-terminus, the 294-residue chain is MTQISGSLVAIVTPMHEDGSLDFPSLRSLIDWHIAEGTDGIVIVGTSGESPTVSVDEHRELIRVTVEQVNKRIPVIAGTGGNSTTEAVELTAYAKSVGADASLQVVPYYNKPTQEGMYLHFRKVAESVDLPVILYNVPGRTVADMSVDTMLRLAQVPGVMGVKEATGNIDRAAQLIKAAPASFKIYSGDDPTAVALMLLGGHGNISVTANVAPRAMHDLCAAAMRGDVETARRIHMQLLSVHKNLFVESNPIPVKWALQAMGKMAGGIRLPLTPLAAQYQEVVRASLQDAGLLS.

A pyruvate-binding site is contributed by S47. Residue Y135 is the Proton donor/acceptor of the active site. K163 acts as the Schiff-base intermediate with substrate in catalysis. I205 is a pyruvate binding site.

It belongs to the DapA family. Homotetramer; dimer of dimers.

The protein resides in the cytoplasm. It catalyses the reaction L-aspartate 4-semialdehyde + pyruvate = (2S,4S)-4-hydroxy-2,3,4,5-tetrahydrodipicolinate + H2O + H(+). It functions in the pathway amino-acid biosynthesis; L-lysine biosynthesis via DAP pathway; (S)-tetrahydrodipicolinate from L-aspartate: step 3/4. Its function is as follows. Catalyzes the condensation of (S)-aspartate-beta-semialdehyde [(S)-ASA] and pyruvate to 4-hydroxy-tetrahydrodipicolinate (HTPA). In Ralstonia nicotianae (strain ATCC BAA-1114 / GMI1000) (Ralstonia solanacearum), this protein is 4-hydroxy-tetrahydrodipicolinate synthase.